Consider the following 152-residue polypeptide: Ribonuclease H (152 aa).

The RNase H type-1 domain occupies 6 to 147 (KKNRVIAYTD…ADELANKAIA (142 aa)). The Mg(2+) site is built by aspartate 15, glutamate 53, aspartate 75, and aspartate 139.

It belongs to the RNase H family. Monomer. Requires Mg(2+) as cofactor.

It localises to the cytoplasm. It carries out the reaction Endonucleolytic cleavage to 5'-phosphomonoester.. Functionally, endonuclease that specifically degrades the RNA of RNA-DNA hybrids. This is Ribonuclease H from Francisella tularensis subsp. tularensis (strain FSC 198).